We begin with the raw amino-acid sequence, 677 residues long: Methionine--tRNA ligase (677 aa).

The short motif at 15–25 (PYANGSIHLGH) is the 'HIGH' region element. Positions 146, 149, 159, and 162 each coordinate Zn(2+). Residues 333-337 (KMSKS) carry the 'KMSKS' region motif. Lys336 serves as a coordination point for ATP. One can recognise a tRNA-binding domain in the interval 575–677 (DFAKVDLRVA…DGAKPGQQVK (103 aa)).

It belongs to the class-I aminoacyl-tRNA synthetase family. MetG type 1 subfamily. Homodimer. It depends on Zn(2+) as a cofactor.

The protein resides in the cytoplasm. The enzyme catalyses tRNA(Met) + L-methionine + ATP = L-methionyl-tRNA(Met) + AMP + diphosphate. Its function is as follows. Is required not only for elongation of protein synthesis but also for the initiation of all mRNA translation through initiator tRNA(fMet) aminoacylation. This is Methionine--tRNA ligase from Klebsiella pneumoniae (strain 342).